The sequence spans 443 residues: ATP-dependent protease ATPase subunit HslU (443 aa).

ATP-binding positions include Ile18, 60 to 65 (GVGKTE), Asp256, Glu321, and Arg393.

Belongs to the ClpX chaperone family. HslU subfamily. As to quaternary structure, a double ring-shaped homohexamer of HslV is capped on each side by a ring-shaped HslU homohexamer. The assembly of the HslU/HslV complex is dependent on binding of ATP.

The protein resides in the cytoplasm. ATPase subunit of a proteasome-like degradation complex; this subunit has chaperone activity. The binding of ATP and its subsequent hydrolysis by HslU are essential for unfolding of protein substrates subsequently hydrolyzed by HslV. HslU recognizes the N-terminal part of its protein substrates and unfolds these before they are guided to HslV for hydrolysis. In Enterobacter sp. (strain 638), this protein is ATP-dependent protease ATPase subunit HslU.